We begin with the raw amino-acid sequence, 264 residues long: Thymidylate synthase (264 aa).

Residue R21 participates in dUMP binding. H51 is a (6R)-5,10-methylene-5,6,7,8-tetrahydrofolate binding site. Residue 126–127 (RR) participates in dUMP binding. C146 serves as the catalytic Nucleophile. DUMP contacts are provided by residues 166–169 (RSCD), N177, and 207–209 (HLY). D169 is a binding site for (6R)-5,10-methylene-5,6,7,8-tetrahydrofolate. Position 263 (A263) interacts with (6R)-5,10-methylene-5,6,7,8-tetrahydrofolate.

It belongs to the thymidylate synthase family. Bacterial-type ThyA subfamily. As to quaternary structure, homodimer.

The protein resides in the cytoplasm. The catalysed reaction is dUMP + (6R)-5,10-methylene-5,6,7,8-tetrahydrofolate = 7,8-dihydrofolate + dTMP. The protein operates within pyrimidine metabolism; dTTP biosynthesis. In terms of biological role, catalyzes the reductive methylation of 2'-deoxyuridine-5'-monophosphate (dUMP) to 2'-deoxythymidine-5'-monophosphate (dTMP) while utilizing 5,10-methylenetetrahydrofolate (mTHF) as the methyl donor and reductant in the reaction, yielding dihydrofolate (DHF) as a by-product. This enzymatic reaction provides an intracellular de novo source of dTMP, an essential precursor for DNA biosynthesis. This Serratia proteamaculans (strain 568) protein is Thymidylate synthase.